Here is a 245-residue protein sequence, read N- to C-terminus: DNA repair protein RecO (245 aa).

Belongs to the RecO family.

Involved in DNA repair and RecF pathway recombination. The sequence is that of DNA repair protein RecO from Anaplasma phagocytophilum (strain HZ).